The primary structure comprises 181 residues: Protein Abitram (181 aa).

This sequence belongs to the ABITRAM family. In terms of assembly, interacts with F-actin. Interacts with G-actin.

The protein localises to the nucleus speckle. Its subcellular location is the cell projection. It is found in the lamellipodium. The protein resides in the nucleus. It localises to the growth cone. The protein localises to the dendrite. Functionally, actin-binding protein that regulates actin polymerization, filopodia dynamics and increases the branching of proximal dendrites of developing neurons. This is Protein Abitram from Homo sapiens (Human).